The primary structure comprises 213 residues: Protein DMP3 (213 aa).

Residues 1–27 (MSSPSSLTQRNPTSSQEQSESVPQLRR) are disordered. 4 helical membrane-spanning segments follow: residues 45 to 65 (LANL…PVFT), 74 to 94 (TQVL…LSSF), 136 to 156 (IRII…AVAL), and 176 to 196 (VLDI…LVFP).

Belongs to the plant DMP1 protein family. Expressed in leaves, siliques and roots (e.g. root hairs).

The protein localises to the endoplasmic reticulum membrane. Its function is as follows. Involved in membrane remodeling. This chain is Protein DMP3, found in Arabidopsis thaliana (Mouse-ear cress).